Here is a 126-residue protein sequence, read N- to C-terminus: Holo-[acyl-carrier-protein] synthase (126 aa).

Positions 9 and 58 each coordinate Mg(2+).

It belongs to the P-Pant transferase superfamily. AcpS family. Requires Mg(2+) as cofactor.

The protein localises to the cytoplasm. The catalysed reaction is apo-[ACP] + CoA = holo-[ACP] + adenosine 3',5'-bisphosphate + H(+). Functionally, transfers the 4'-phosphopantetheine moiety from coenzyme A to a Ser of acyl-carrier-protein. This is Holo-[acyl-carrier-protein] synthase from Klebsiella pneumoniae (strain 342).